The chain runs to 206 residues: Large ribosomal subunit protein uL4 (206 aa).

The interval 47–94 (NRAQKGRSEIAKSTRKPFRQKGTGNARAGMASSPLWRGGGKIFPNSPD) is disordered.

This sequence belongs to the universal ribosomal protein uL4 family. As to quaternary structure, part of the 50S ribosomal subunit.

Functionally, one of the primary rRNA binding proteins, this protein initially binds near the 5'-end of the 23S rRNA. It is important during the early stages of 50S assembly. It makes multiple contacts with different domains of the 23S rRNA in the assembled 50S subunit and ribosome. Its function is as follows. Forms part of the polypeptide exit tunnel. The sequence is that of Large ribosomal subunit protein uL4 from Azoarcus sp. (strain BH72).